Here is a 156-residue protein sequence, read N- to C-terminus: Ribosomal RNA large subunit methyltransferase H (156 aa).

S-adenosyl-L-methionine contacts are provided by residues L73, G104, and 123 to 128 (LSALTL).

Belongs to the RNA methyltransferase RlmH family. As to quaternary structure, homodimer.

The protein resides in the cytoplasm. It carries out the reaction pseudouridine(1915) in 23S rRNA + S-adenosyl-L-methionine = N(3)-methylpseudouridine(1915) in 23S rRNA + S-adenosyl-L-homocysteine + H(+). Its function is as follows. Specifically methylates the pseudouridine at position 1915 (m3Psi1915) in 23S rRNA. The protein is Ribosomal RNA large subunit methyltransferase H of Shewanella frigidimarina (strain NCIMB 400).